A 110-amino-acid chain; its full sequence is ATP-dependent Clp protease adapter protein ClpS 2 (110 aa).

Positions 1–24 are disordered; sequence MSNDENRSGSPTGPNTSVITKVKP. Polar residues predominate over residues 8–19; it reads SGSPTGPNTSVI.

Belongs to the ClpS family. In terms of assembly, binds to the N-terminal domain of the chaperone ClpA.

Functionally, involved in the modulation of the specificity of the ClpAP-mediated ATP-dependent protein degradation. This is ATP-dependent Clp protease adapter protein ClpS 2 from Bradyrhizobium diazoefficiens (strain JCM 10833 / BCRC 13528 / IAM 13628 / NBRC 14792 / USDA 110).